Reading from the N-terminus, the 513-residue chain is 2,3-bisphosphoglycerate-independent phosphoglycerate mutase (513 aa).

The Mn(2+) site is built by D14 and S64. The active-site Phosphoserine intermediate is the S64. Substrate-binding positions include H125, 155-156, R187, R193, 259-262, and K333; these read RD and RADR. 5 residues coordinate Mn(2+): D400, H404, D441, H442, and H460.

This sequence belongs to the BPG-independent phosphoglycerate mutase family. As to quaternary structure, monomer. Requires Mn(2+) as cofactor.

The catalysed reaction is (2R)-2-phosphoglycerate = (2R)-3-phosphoglycerate. It participates in carbohydrate degradation; glycolysis; pyruvate from D-glyceraldehyde 3-phosphate: step 3/5. Its function is as follows. Catalyzes the interconversion of 2-phosphoglycerate and 3-phosphoglycerate. The chain is 2,3-bisphosphoglycerate-independent phosphoglycerate mutase from Pseudomonas fluorescens (strain ATCC BAA-477 / NRRL B-23932 / Pf-5).